The chain runs to 388 residues: Processive diacylglycerol beta-glucosyltransferase (388 aa).

This sequence belongs to the glycosyltransferase 28 family. UgtP subfamily.

It is found in the cell membrane. It carries out the reaction a 1,2-diacyl-3-O-(beta-D-glucopyranosyl)-sn-glycerol + UDP-alpha-D-glucose = a 1,2-diacyl-3-O-(beta-D-Glc-(1-&gt;6)-beta-D-Glc)-sn-glycerol + UDP + H(+). It catalyses the reaction a 1,2-diacyl-3-O-(beta-D-Glc-(1-&gt;6)-beta-D-Glc)-sn-glycerol + UDP-alpha-D-glucose = a 1,2-diacyl-3-O-(beta-D-Glc-(1-&gt;6)-beta-D-Glc-(1-&gt;6)-beta-D-Glc)-sn-glycerol + UDP + H(+). The enzyme catalyses a 1,2-diacyl-sn-glycerol + UDP-alpha-D-glucose = a 1,2-diacyl-3-O-(beta-D-glucopyranosyl)-sn-glycerol + UDP + H(+). It participates in glycolipid metabolism; diglucosyl-diacylglycerol biosynthesis. Functionally, processive glucosyltransferase involved in the biosynthesis of both the bilayer- and non-bilayer-forming membrane glucolipids. Is able to successively transfer up to three glucosyl residues to diacylglycerol (DAG), thereby catalyzing the formation of beta-monoglucosyl-DAG (3-O-(beta-D-glucopyranosyl)-1,2-diacyl-sn-glycerol), beta-diglucosyl-DAG (3-O-(beta-D-glucopyranosyl-beta-(1-&gt;6)-D-glucopyranosyl)-1,2-diacyl-sn-glycerol) and beta-triglucosyl-DAG (3-O-(beta-D-glucopyranosyl-beta-(1-&gt;6)-D-glucopyranosyl-beta-(1-&gt;6)-D-glucopyranosyl)-1,2-diacyl-sn-glycerol). Beta-diglucosyl-DAG is the predominant glycolipid found in Bacillales and is also used as a membrane anchor for lipoteichoic acid (LTA). The sequence is that of Processive diacylglycerol beta-glucosyltransferase from Bacillus cytotoxicus (strain DSM 22905 / CIP 110041 / 391-98 / NVH 391-98).